A 376-amino-acid chain; its full sequence is Chaperone protein DnaJ 2 (376 aa).

The 66-residue stretch at 5-70 (DYYEVLGVNR…QKRAAYDRYG (66 aa)) folds into the J domain. The segment at 135–213 (GADKTIRIPT…CGGAGRVKRQ (79 aa)) adopts a CR-type zinc-finger fold. Zn(2+)-binding residues include Cys148, Cys151, Cys165, Cys168, Cys187, Cys190, Cys201, and Cys204. 4 CXXCXGXG motif repeats span residues 148 to 155 (CETCHGSG), 165 to 172 (CPTCGGAG), 187 to 194 (CPKCHGTG), and 201 to 208 (CRDCGGAG).

This sequence belongs to the DnaJ family. As to quaternary structure, homodimer. Requires Zn(2+) as cofactor.

It localises to the cytoplasm. Participates actively in the response to hyperosmotic and heat shock by preventing the aggregation of stress-denatured proteins and by disaggregating proteins, also in an autonomous, DnaK-independent fashion. Unfolded proteins bind initially to DnaJ; upon interaction with the DnaJ-bound protein, DnaK hydrolyzes its bound ATP, resulting in the formation of a stable complex. GrpE releases ADP from DnaK; ATP binding to DnaK triggers the release of the substrate protein, thus completing the reaction cycle. Several rounds of ATP-dependent interactions between DnaJ, DnaK and GrpE are required for fully efficient folding. Also involved, together with DnaK and GrpE, in the DNA replication of plasmids through activation of initiation proteins. The protein is Chaperone protein DnaJ 2 of Aromatoleum aromaticum (strain DSM 19018 / LMG 30748 / EbN1) (Azoarcus sp. (strain EbN1)).